The primary structure comprises 420 residues: Probable protein phosphatase 2C 73 (420 aa).

A PPM-type phosphatase domain is found at 33–336; that stretch reads GVSMHTKQGW…DDCAVVCLFL (304 aa). 2 residues coordinate Mn(2+): aspartate 69 and glycine 70. Residues 96–105 show a composition bias toward polar residues; that stretch reads LKTEQDPSSN. The segment at 96 to 119 is disordered; that stretch reads LKTEQDPSSNTDKETLEKSDCTSL. Basic and acidic residues predominate over residues 106 to 115; the sequence is TDKETLEKSD. The Mn(2+) site is built by aspartate 281 and aspartate 327.

Belongs to the PP2C family. Mg(2+) serves as cofactor. It depends on Mn(2+) as a cofactor.

It carries out the reaction O-phospho-L-seryl-[protein] + H2O = L-seryl-[protein] + phosphate. It catalyses the reaction O-phospho-L-threonyl-[protein] + H2O = L-threonyl-[protein] + phosphate. This chain is Probable protein phosphatase 2C 73, found in Oryza sativa subsp. japonica (Rice).